A 977-amino-acid polypeptide reads, in one-letter code: Kinesin-like protein KIN-14D (977 aa).

A compositionally biased stretch (low complexity) spans 1–13 (MSSSNNAAAAAAS). The tract at residues 1–20 (MSSSNNAAAAAASPDPSRRR) is disordered. The 102-residue stretch at 17 to 118 (SRRREDVVGW…CILALKDRFG (102 aa)) folds into the Calponin-homology (CH) domain. A coiled-coil region spans residues 297-384 (KAEETQRIED…TKRRIELEEL (88 aa)). Positions 472–800 (NIRVYCRIRP…LKFAERVSGV (329 aa)) constitute a Kinesin motor domain. An ATP-binding site is contributed by 556-563 (GQTGSGKT). Positions 812–847 (KEGKDVKELMDQLSLLKDTISKKDEEIDRLQLLNSS) form a coiled coil. The interval 852–977 (PTRQADSVLK…RNNSTLKRGP (126 aa)) is disordered. Polar residues-rich tracts occupy residues 861–879 (KHSS…TSVG) and 956–977 (RKSS…KRGP).

It belongs to the TRAFAC class myosin-kinesin ATPase superfamily. Kinesin family. KIN-14 subfamily.

This chain is Kinesin-like protein KIN-14D, found in Oryza sativa subsp. japonica (Rice).